The primary structure comprises 154 residues: MNIVEGKLSAEGLKFGIVVGRFNSFITERLLEGAIDCILRHGGSKENIEIVKVPGSFEIPLTAKKLAKSGKYDAVICLGAVIRGSTPHFDYVANEVTKGIAQVSLETEVPIGYGILTTDTIEQAVERAGTKMGNKGFDAAMVAIEMANVLKSIG.

5-amino-6-(D-ribitylamino)uracil contacts are provided by residues Phe22, 56-58, and 80-82; these read SFE and AVI. Residue 85–86 participates in (2S)-2-hydroxy-3-oxobutyl phosphate binding; that stretch reads ST. Catalysis depends on His88, which acts as the Proton donor. Residue Tyr113 participates in 5-amino-6-(D-ribitylamino)uracil binding. Position 127 (Arg127) interacts with (2S)-2-hydroxy-3-oxobutyl phosphate.

It belongs to the DMRL synthase family. In terms of assembly, forms an icosahedral capsid composed of 60 subunits, arranged as a dodecamer of pentamers.

The enzyme catalyses (2S)-2-hydroxy-3-oxobutyl phosphate + 5-amino-6-(D-ribitylamino)uracil = 6,7-dimethyl-8-(1-D-ribityl)lumazine + phosphate + 2 H2O + H(+). The protein operates within cofactor biosynthesis; riboflavin biosynthesis; riboflavin from 2-hydroxy-3-oxobutyl phosphate and 5-amino-6-(D-ribitylamino)uracil: step 1/2. Its function is as follows. Catalyzes the formation of 6,7-dimethyl-8-ribityllumazine by condensation of 5-amino-6-(D-ribitylamino)uracil with 3,4-dihydroxy-2-butanone 4-phosphate. This is the penultimate step in the biosynthesis of riboflavin. The chain is 6,7-dimethyl-8-ribityllumazine synthase from Sulfurihydrogenibium sp. (strain YO3AOP1).